The primary structure comprises 417 residues: Gamma-glutamyl phosphate reductase (417 aa).

This sequence belongs to the gamma-glutamyl phosphate reductase family.

It is found in the cytoplasm. The catalysed reaction is L-glutamate 5-semialdehyde + phosphate + NADP(+) = L-glutamyl 5-phosphate + NADPH + H(+). It participates in amino-acid biosynthesis; L-proline biosynthesis; L-glutamate 5-semialdehyde from L-glutamate: step 2/2. Catalyzes the NADPH-dependent reduction of L-glutamate 5-phosphate into L-glutamate 5-semialdehyde and phosphate. The product spontaneously undergoes cyclization to form 1-pyrroline-5-carboxylate. This chain is Gamma-glutamyl phosphate reductase, found in Desulfitobacterium hafniense (strain Y51).